The following is a 622-amino-acid chain: Threonine--tRNA ligase (622 aa).

The tract at residues 1–141 (MKTLLIHSDY…SRKITTERKE (141 aa)) is editing domain. The interval 199–498 (PHVKYIKEKE…TLENKPPALP (300 aa)) is catalytic. Zn(2+) is bound by residues Cys-291, His-343, and His-467.

It belongs to the class-II aminoacyl-tRNA synthetase family. In terms of assembly, homodimer. Zn(2+) is required as a cofactor.

The protein resides in the cytoplasm. The catalysed reaction is tRNA(Thr) + L-threonine + ATP = L-threonyl-tRNA(Thr) + AMP + diphosphate + H(+). Functionally, catalyzes the attachment of threonine to tRNA(Thr) in a two-step reaction: L-threonine is first activated by ATP to form Thr-AMP and then transferred to the acceptor end of tRNA(Thr). Also edits incorrectly charged L-seryl-tRNA(Thr). The sequence is that of Threonine--tRNA ligase from Methanococcus maripaludis (strain C7 / ATCC BAA-1331).